We begin with the raw amino-acid sequence, 87 residues long: Protein ORF3 (87 aa).

Residues 58–87 (GALNNAPREPSAPPLSQTLSPRQVLARYQM) form a disordered region. Positions 67–70 (PSAP) match the PTAP/PSAP motif motif.

This sequence belongs to the hepevirus ORF3 protein family. In terms of processing, palmitoylated in the N-terminus.

The protein resides in the host endoplasmic reticulum membrane. The protein localises to the host cytoplasm. It localises to the host cytoskeleton. It is found in the virion. Its subcellular location is the host cell membrane. In terms of biological role, small multifunctional phosphoprotein involved in virion morphogenesis, egress and counteracting host innate immunity. The polypeptide is Protein ORF3 (Avian hepatitis E virus (isolate Chicken/California/Meng) (AHEV)).